We begin with the raw amino-acid sequence, 1222 residues long: Probable disease resistance protein At5g45510 (1222 aa).

ATP is bound at residue 49–56; it reads GEAGIGKT. Residues 122 to 183 are a coiled coil; that stretch reads GERDEDEEEE…KLEAEKKLVD (62 aa). Basic and acidic residues-rich tracts occupy residues 171 to 205, 212 to 224, 263 to 279, and 286 to 322; these read AAEKLEAEKKLVDPAAKKAKDHGNKNPTDAAKEKT, GEDKAQTSSERKP, RRQETEEATKSGEHAEG, and SGEKKEDTDGEDEIRSADKEEPESQARVKTEEKHEKV. Disordered regions lie at residues 171-225 and 263-327; these read AAEK…RKPY and RRQE…PPTI. Position 293 is a phosphothreonine (Thr-293). 11 LRR repeats span residues 654-676, 677-699, 702-724, 725-747, 785-806, 813-835, 836-856, 861-883, 884-906, 907-929, and 931-951; these read LLRVLIIRDCDLLKSIEELKALT, KLNTLEVSGASSLSKISEKFFES, ELRSLHLSGLKIESSPPSISGLK, ELHCLIIKDCPLLQDLPNIQELV, KLQHLDFSGSQIERLPIFQDSA, SLTRLLLRNCSKLRRLPSLKPLS, GLQILDLSGTTSLVEMLEVCF, ELKTLNLSGTNLSELATTIEDLS, SLNELLLRDCINLDAIPNIEKLE, NLEVIDVSGSAKLAKIEGSFEKM, and YLRVVDLSGTQVETPELPADT.

Belongs to the disease resistance NB-LRR family.

In terms of biological role, probable disease resistance protein. The sequence is that of Probable disease resistance protein At5g45510 from Arabidopsis thaliana (Mouse-ear cress).